Reading from the N-terminus, the 589-residue chain is MIMRMSSLFVRTLREDPADAEVPSHRLLVRAGYIRRAAPGIYTWLPLGLRVLRKIENVIREEMDAIGAQEMLFPALLPREPYEATNRWTEYGDGIFRLQDRKGADYLLGPTHEEMFTLVVKDLYSSYKDLPLSIYQIQTKYRDEARPRAGLLRGREFVMKDSYSFDVDDAGLDVSYQKHRDAYVRIFDRLGFEYVIVEAMSGAMGGSKSEEFLAKASVGEDTYVRCTLCDYAANVEAVHSPPIPPVPYDDAPAAHAEQTPDTPTIETLVAHLNERFPREDRPWAASDTLKNVVFSVHHPDGATEALAVGLPGDREVDAKRLEAHLGEGVVFEPFGEADFAARPTLAKGYIGPGALGEKKPAGVRYLLDPRVVEGTRWVTGADAAGSHVIDLVAGRDFSGDGLIEVAEVRDGDPCPRGDGGTLETARGIEMGHIFQLGRKYADALDLKVLDEQGKLVTVTMGSYGIGPSRAVAAIAEGTHDELGLAWPREVAPADVHIVATGKDEHVFAAAERIAHELDKQGVEVLYDDRPKVSPGVKFKDAELIGVPTIVVVGKGLAAGTIEVKDRRTGQRQDVPADHLVDRVIAIVRA.

It belongs to the class-II aminoacyl-tRNA synthetase family. ProS type 1 subfamily. As to quaternary structure, homodimer.

It is found in the cytoplasm. The catalysed reaction is tRNA(Pro) + L-proline + ATP = L-prolyl-tRNA(Pro) + AMP + diphosphate. In terms of biological role, catalyzes the attachment of proline to tRNA(Pro) in a two-step reaction: proline is first activated by ATP to form Pro-AMP and then transferred to the acceptor end of tRNA(Pro). As ProRS can inadvertently accommodate and process non-cognate amino acids such as alanine and cysteine, to avoid such errors it has two additional distinct editing activities against alanine. One activity is designated as 'pretransfer' editing and involves the tRNA(Pro)-independent hydrolysis of activated Ala-AMP. The other activity is designated 'posttransfer' editing and involves deacylation of mischarged Ala-tRNA(Pro). The misacylated Cys-tRNA(Pro) is not edited by ProRS. This chain is Proline--tRNA ligase, found in Nocardioides sp. (strain ATCC BAA-499 / JS614).